A 295-amino-acid chain; its full sequence is Defective in cullin neddylation protein AAR3 (295 aa).

Positions 1 to 180 constitute a DCUN1 domain; it reads MDSSPVSARF…LIDDFVEHMY (180 aa). A Nuclear localization signal motif is present at residues 214–221; sequence YRRPHTGL. A disordered region spans residues 214–251; it reads YRRPHTGLRNIPGLKRKTSKKNDEEEEDEDEEVLETQN. Over residues 237–247 the composition is skewed to acidic residues; it reads EEEEDEDEEVL.

The protein resides in the nucleus. May contribute to the neddylation of all cullins by transferring NEDD8 from N-terminally acetylated NEDD8-conjugating E2s enzyme to different cullin C-terminal domain-RBX complexes; neddylation of cullins play an essential role in the regulation of SCF-type complexes activity. Regulates responses to the synthetic auxin 2,4-dichlorophenoxyacetic acid (2,4-D) in roots, probably by modulating the SCF(TIR1) ubiquitin E3 ligase complex-mediated proteolysis. This is Defective in cullin neddylation protein AAR3 from Arabidopsis thaliana (Mouse-ear cress).